Here is a 370-residue protein sequence, read N- to C-terminus: Sensor histidine kinase DesK (370 aa).

The Extracellular segment spans residues 1–10; sequence MIKNHFTFQK. Residues 11–31 traverse the membrane as a helical segment; the sequence is LNGITPYIWTIFFILPFYFIW. At 32-36 the chain is on the cytoplasmic side; it reads KSSST. The chain crosses the membrane as a helical span at residues 37-57; that stretch reads FVIIVGIILTLLFFSVYRFAF. The Extracellular portion of the chain corresponds to 58–70; that stretch reads VSKGWTIYLWGFL. The chain crosses the membrane as a helical span at residues 71 to 91; that stretch reads LIGISTASITLFSYIYFAFFI. Topologically, residues 92–103 are cytoplasmic; the sequence is AYFIGNIKERVP. The helical transmembrane segment at 104-124 threads the bilayer; that stretch reads FHILYYVHLISAAVAANFSLV. Over 125–128 the chain is Extracellular; the sequence is LKKE. Residues 129–149 form a helical membrane-spanning segment; it reads FFLTQIPFVVITLISAILLPF. Residues 150-370 lie on the Cytoplasmic side of the membrane; that stretch reads SIKSRKERER…LTMAIPNNSK (221 aa). In terms of domain architecture, Histidine kinase spans 186 to 369; sequence DLHDTLGQKL…KLTMAIPNNS (184 aa). His188 carries the phosphohistidine; by autocatalysis modification.

It localises to the cell membrane. It carries out the reaction ATP + protein L-histidine = ADP + protein N-phospho-L-histidine.. Functionally, member of the two-component regulatory system DesR/DesK, responsible for cold induction of the des gene coding for the Delta5 acyl-lipid desaturase. Acts as a sensor of the membrane fluidity. Probably activates DesR by phosphorylation. This is Sensor histidine kinase DesK (desK) from Bacillus subtilis (strain 168).